The primary structure comprises 432 residues: Keratin, type I cytoskeletal 17 (432 aa).

Residues 1 to 24 (MTTSIRQFTSSSSIKGSSGLGGGS) are disordered. A head region spans residues 1 to 83 (MTTSIRQFTS…GGVDGLLAGG (83 aa)). Residues S12 and S13 each carry the phosphoserine modification. K15 is covalently cross-linked (Glycyl lysine isopeptide (Lys-Gly) (interchain with G-Cter in SUMO1); alternate). K15 is covalently cross-linked (Glycyl lysine isopeptide (Lys-Gly) (interchain with G-Cter in SUMO2); alternate). Residues S25, S32, and S39 each carry the phosphoserine modification. S44 is modified (phosphoserine; by RPS6KA1). The tract at residues 84-120 (EKATMQNLNDRLASYLDKVRALEEANTELEVKIRDWY) is coil 1A. The IF rod domain occupies 84-395 (EKATMQNLND…RLLEGEDAHL (312 aa)). A peptide epitope S1; induces T-cell and keratinocyte proliferation and IFN-gamma production region spans residues 102-116 (VRALEEANTELEVKI). Phosphothreonine is present on T110. Residues 121–138 (QRQAPGPARDYSQYYRTI) are linker 1. The segment at 139–230 (EELQNKILTA…NHEEEMNALR (92 aa)) is coil 1B. A peptide epitope S2; induces T-cell proliferation and IFN-gamma production region spans residues 153 to 167 (ANILLQIDNARLAAD). The linker 12 stretch occupies residues 231-250 (GQVGGEINVEMDAAPGVDLS). The coil 2 stretch occupies residues 251 to 392 (RILNEMRDQY…TYRRLLEGED (142 aa)). K278 is covalently cross-linked (Glycyl lysine isopeptide (Lys-Gly) (interchain with G-Cter in SUMO2)). The residue at position 279 (T279) is a Phosphothreonine. At S323 the chain carries Phosphoserine. Residues 332 to 346 (ENRYCVQLSQIQGLI) are peptide epitope S4; induces T-cell and keratinocyte proliferation and IFN-gamma production. Residues 393-432 (AHLTQYKKEPVTTRQVRTIVEEVQDGKVISSREQVHQTTR) are tail. Glycyl lysine isopeptide (Lys-Gly) (interchain with G-Cter in SUMO1); alternate cross-links involve residues K399, K400, and K419. Glycyl lysine isopeptide (Lys-Gly) (interchain with G-Cter in SUMO2); alternate cross-links involve residues K399, K400, and K419.

The protein belongs to the intermediate filament family. Heterodimer of a type I and a type II keratin. KRT17 associates with KRT6 isomers (KRT6A or KRT6B). Interacts with TRADD and SFN. In terms of processing, phosphorylation at Ser-44 occurs in a growth- and stress-dependent fashion in skin keratinocytes, it has no effect on filament organization. Expressed in the outer root sheath and medulla region of hair follicle specifically from eyebrow and beard, digital pulp, nail matrix and nail bed epithelium, mucosal stratified squamous epithelia and in basal cells of oral epithelium, palmoplantar epidermis and sweat and mammary glands. Also expressed in myoepithelium of prostate, basal layer of urinary bladder, cambial cells of sebaceous gland and in exocervix (at protein level).

It is found in the cytoplasm. Its function is as follows. Type I keratin involved in the formation and maintenance of various skin appendages, specifically in determining shape and orientation of hair. Required for the correct growth of hair follicles, in particular for the persistence of the anagen (growth) state. Modulates the function of TNF-alpha in the specific context of hair cycling. Regulates protein synthesis and epithelial cell growth through binding to the adapter protein SFN and by stimulating Akt/mTOR pathway. Involved in tissue repair. May be a marker of basal cell differentiation in complex epithelia and therefore indicative of a certain type of epithelial 'stem cells'. Acts as a promoter of epithelial proliferation by acting a regulator of immune response in skin: promotes Th1/Th17-dominated immune environment contributing to the development of basaloid skin tumors. May act as an autoantigen in the immunopathogenesis of psoriasis, with certain peptide regions being a major target for autoreactive T-cells and hence causing their proliferation. This is Keratin, type I cytoskeletal 17 (KRT17) from Homo sapiens (Human).